We begin with the raw amino-acid sequence, 878 residues long: NUT family member 2B (878 aa).

6 disordered regions span residues 273–324 (WSQG…DDSC), 417–512 (QKSQ…PEEI), 527–560 (LLGPSLGATGEPEKQREEGKVKQPQEEDWTPPDP), 624–693 (PPLK…GMAR), 709–757 (LRAA…EEEE), and 775–878 (WLPQ…HCSQ). Composition is skewed to pro residues over residues 278–288 (PLPPPPPPAAQ) and 427–444 (CLPPPATPRLEPRGPPAP). Positions 476-487 (TKARRPPPRPHR) are enriched in basic residues. Basic and acidic residues predominate over residues 537–551 (EPEKQREEGKVKQPQ).

It belongs to the NUT family.

This is NUT family member 2B (NUTM2B) from Homo sapiens (Human).